The following is a 336-amino-acid chain: Eukaryotic translation initiation factor 3 subunit H (336 aa).

An MPN domain is found at 21–154; the sequence is VQCDGLAAMK…LKAYRLTPQA (134 aa).

It belongs to the eIF-3 subunit H family. As to quaternary structure, component of the eukaryotic translation initiation factor 3 (eIF-3) complex.

It is found in the cytoplasm. In terms of biological role, component of the eukaryotic translation initiation factor 3 (eIF-3) complex, which is involved in protein synthesis of a specialized repertoire of mRNAs and, together with other initiation factors, stimulates binding of mRNA and methionyl-tRNAi to the 40S ribosome. The eIF-3 complex specifically targets and initiates translation of a subset of mRNAs involved in cell proliferation. The protein is Eukaryotic translation initiation factor 3 subunit H of Culex quinquefasciatus (Southern house mosquito).